Here is a 380-residue protein sequence, read N- to C-terminus: Probable dual-specificity RNA methyltransferase RlmN (380 aa).

Glu112 functions as the Proton acceptor in the catalytic mechanism. In terms of domain architecture, Radical SAM core spans 118-358 (YPDRVTACLS…TTVRDTRGRE (241 aa)). A disulfide bond links Cys125 and Cys363. Residues Cys132, Cys136, and Cys139 each contribute to the [4Fe-4S] cluster site. Residues 187–188 (GE), Ser221, 244–246 (SLH), and Asn320 each bind S-adenosyl-L-methionine. Catalysis depends on Cys363, which acts as the S-methylcysteine intermediate.

Belongs to the radical SAM superfamily. RlmN family. Requires [4Fe-4S] cluster as cofactor.

It localises to the cytoplasm. The enzyme catalyses adenosine(2503) in 23S rRNA + 2 reduced [2Fe-2S]-[ferredoxin] + 2 S-adenosyl-L-methionine = 2-methyladenosine(2503) in 23S rRNA + 5'-deoxyadenosine + L-methionine + 2 oxidized [2Fe-2S]-[ferredoxin] + S-adenosyl-L-homocysteine. The catalysed reaction is adenosine(37) in tRNA + 2 reduced [2Fe-2S]-[ferredoxin] + 2 S-adenosyl-L-methionine = 2-methyladenosine(37) in tRNA + 5'-deoxyadenosine + L-methionine + 2 oxidized [2Fe-2S]-[ferredoxin] + S-adenosyl-L-homocysteine. Specifically methylates position 2 of adenine 2503 in 23S rRNA and position 2 of adenine 37 in tRNAs. The polypeptide is Probable dual-specificity RNA methyltransferase RlmN (Salinispora arenicola (strain CNS-205)).